The sequence spans 957 residues: Glycine dehydrogenase (decarboxylating) (957 aa).

K708 carries the N6-(pyridoxal phosphate)lysine modification.

This sequence belongs to the GcvP family. As to quaternary structure, the glycine cleavage system is composed of four proteins: P, T, L and H. Pyridoxal 5'-phosphate is required as a cofactor.

It catalyses the reaction N(6)-[(R)-lipoyl]-L-lysyl-[glycine-cleavage complex H protein] + glycine + H(+) = N(6)-[(R)-S(8)-aminomethyldihydrolipoyl]-L-lysyl-[glycine-cleavage complex H protein] + CO2. Functionally, the glycine cleavage system catalyzes the degradation of glycine. The P protein binds the alpha-amino group of glycine through its pyridoxal phosphate cofactor; CO(2) is released and the remaining methylamine moiety is then transferred to the lipoamide cofactor of the H protein. The chain is Glycine dehydrogenase (decarboxylating) from Enterobacter sp. (strain 638).